The chain runs to 171 residues: Inosine/xanthosine triphosphatase (171 aa).

8–13 (TTNPAK) provides a ligand contact to substrate. Residue Glu-38 coordinates Mg(2+).

It belongs to the YjjX NTPase family. As to quaternary structure, homodimer. The cofactor is Mg(2+). It depends on Mn(2+) as a cofactor.

It catalyses the reaction XTP + H2O = XDP + phosphate + H(+). The catalysed reaction is ITP + H2O = IDP + phosphate + H(+). Functionally, phosphatase that hydrolyzes non-canonical purine nucleotides such as XTP and ITP to their respective diphosphate derivatives. Probably excludes non-canonical purines from DNA/RNA precursor pool, thus preventing their incorporation into DNA/RNA and avoiding chromosomal lesions. The protein is Inosine/xanthosine triphosphatase of Klebsiella pneumoniae (strain 342).